A 201-amino-acid polypeptide reads, in one-letter code: Protein ripply1 (201 aa).

The tract at residues 1–29 (MDPAASPAAAPPAAPAAAPAADPAADPAA) is disordered. The span at 15–29 (PAAAPAADPAADPAA) shows a compositional bias: low complexity. Positions 57–60 (AYLW) match the WRPW motif motif. The segment at 99–134 (HPVRLYWPKSHSFDYLYSAGEILLNNFPVQATINLY) is ripply homology domain. Acidic residues predominate over residues 136 to 174 (DSDSADNEEDKEEEEEEEEEEDDEEEEEDEDKDVNENEP). The segment at 136–201 (DSDSADNEED…SPDPHSACPN (66 aa)) is disordered.

It belongs to the ripply family. Expressed in the anterior presomitic mesoderm and somites of stage E9.5 dpc embryos. Also expressed in tongue, diaphragm and intercostal muscles at 16.5 dpc.

It is found in the nucleus. Its function is as follows. Plays a role in somitogenesis. Essential for transcriptional repression of the segmental patterning genes, thus terminating the segmentation program in the presomitic mesoderm, and also required for the maintenance of rostrocaudal polarity in somites. This is Protein ripply1 from Mus musculus (Mouse).